Here is a 443-residue protein sequence, read N- to C-terminus: Probable glycine dehydrogenase (decarboxylating) subunit 1 (443 aa).

Belongs to the GcvP family. N-terminal subunit subfamily. As to quaternary structure, the glycine cleavage system is composed of four proteins: P, T, L and H. In this organism, the P 'protein' is a heterodimer of two subunits.

The catalysed reaction is N(6)-[(R)-lipoyl]-L-lysyl-[glycine-cleavage complex H protein] + glycine + H(+) = N(6)-[(R)-S(8)-aminomethyldihydrolipoyl]-L-lysyl-[glycine-cleavage complex H protein] + CO2. In terms of biological role, the glycine cleavage system catalyzes the degradation of glycine. The P protein binds the alpha-amino group of glycine through its pyridoxal phosphate cofactor; CO(2) is released and the remaining methylamine moiety is then transferred to the lipoamide cofactor of the H protein. The sequence is that of Probable glycine dehydrogenase (decarboxylating) subunit 1 from Nitratidesulfovibrio vulgaris (strain DSM 19637 / Miyazaki F) (Desulfovibrio vulgaris).